The chain runs to 166 residues: Putative peptidyl-prolyl cis-trans isomerase dodo (166 aa).

The region spanning 5–39 is the WW domain; that stretch reads EQLPDGWEKRTSRSTGMSYYLNMYTKESQWDQPTE. Residues 32-53 form a disordered region; sequence SQWDQPTEPAKKAGGGSAGGGD. Over residues 44-53 the composition is skewed to gly residues; it reads AGGGSAGGGD. Residues 55 to 166 form the PpiC domain; that stretch reads PDEVHCLHLL…SGLHIILRKA (112 aa).

It catalyses the reaction [protein]-peptidylproline (omega=180) = [protein]-peptidylproline (omega=0). The polypeptide is Putative peptidyl-prolyl cis-trans isomerase dodo (dod) (Drosophila melanogaster (Fruit fly)).